The chain runs to 277 residues: Diaminopimelate epimerase (277 aa).

Residues Asn-11 and Asn-62 each coordinate substrate. Cys-71 (proton donor) is an active-site residue. Substrate-binding positions include 72 to 73 (GN), Asn-160, Asn-193, and 211 to 212 (ER). Cys-220 (proton acceptor) is an active-site residue. Residue 221-222 (GT) participates in substrate binding.

This sequence belongs to the diaminopimelate epimerase family. Homodimer.

Its subcellular location is the cytoplasm. The enzyme catalyses (2S,6S)-2,6-diaminopimelate = meso-2,6-diaminopimelate. It participates in amino-acid biosynthesis; L-lysine biosynthesis via DAP pathway; DL-2,6-diaminopimelate from LL-2,6-diaminopimelate: step 1/1. Catalyzes the stereoinversion of LL-2,6-diaminopimelate (L,L-DAP) to meso-diaminopimelate (meso-DAP), a precursor of L-lysine. In Methanococcus maripaludis (strain DSM 14266 / JCM 13030 / NBRC 101832 / S2 / LL), this protein is Diaminopimelate epimerase.